The primary structure comprises 91 residues: MAIFKSISSISNSTSAMGSSNSTSNRNGFTSNDNSIAYFDGGCGGSGLGGWGGLSGWGGDGGFNGGCSGGSNTNIINLDIDIGRRRHRRCC.

Residues 1–25 (MAIFKSISSISNSTSAMGSSNSTSN) show a composition bias toward low complexity. The interval 1-26 (MAIFKSISSISNSTSAMGSSNSTSNR) is disordered.

It belongs to the UPF0512 family.

The chain is UPF0512 protein E from Dictyostelium discoideum (Social amoeba).